The chain runs to 98 residues: Co-chaperonin GroES (98 aa).

This sequence belongs to the GroES chaperonin family. Heptamer of 7 subunits arranged in a ring. Interacts with the chaperonin GroEL.

The protein resides in the cytoplasm. In terms of biological role, together with the chaperonin GroEL, plays an essential role in assisting protein folding. The GroEL-GroES system forms a nano-cage that allows encapsulation of the non-native substrate proteins and provides a physical environment optimized to promote and accelerate protein folding. GroES binds to the apical surface of the GroEL ring, thereby capping the opening of the GroEL channel. The protein is Co-chaperonin GroES of Bartonella quintana (strain Toulouse) (Rochalimaea quintana).